Reading from the N-terminus, the 579-residue chain is 2-isopropylmalate synthase (579 aa).

The region spanning 40–314 (PRWCAVDLRD…DPMIDFSDID (275 aa)) is the Pyruvate carboxyltransferase domain. Residues Asp49, His253, His255, and Asn289 each contribute to the Mg(2+) site. The segment at 456-579 (SSKEDGQWGR…VNRAIRDAQA (124 aa)) is regulatory domain.

The protein belongs to the alpha-IPM synthase/homocitrate synthase family. LeuA type 2 subfamily. Homodimer. The cofactor is Mg(2+).

The protein localises to the cytoplasm. It catalyses the reaction 3-methyl-2-oxobutanoate + acetyl-CoA + H2O = (2S)-2-isopropylmalate + CoA + H(+). It functions in the pathway amino-acid biosynthesis; L-leucine biosynthesis; L-leucine from 3-methyl-2-oxobutanoate: step 1/4. Catalyzes the condensation of the acetyl group of acetyl-CoA with 3-methyl-2-oxobutanoate (2-ketoisovalerate) to form 3-carboxy-3-hydroxy-4-methylpentanoate (2-isopropylmalate). This Arthrobacter sp. (strain FB24) protein is 2-isopropylmalate synthase.